The sequence spans 252 residues: Hydroxyacylglutathione hydrolase (252 aa).

7 residues coordinate Zn(2+): His-54, His-56, Asp-58, His-59, His-113, Asp-132, and His-170.

This sequence belongs to the metallo-beta-lactamase superfamily. Glyoxalase II family. In terms of assembly, monomer. Zn(2+) serves as cofactor.

The enzyme catalyses an S-(2-hydroxyacyl)glutathione + H2O = a 2-hydroxy carboxylate + glutathione + H(+). It participates in secondary metabolite metabolism; methylglyoxal degradation; (R)-lactate from methylglyoxal: step 2/2. Functionally, thiolesterase that catalyzes the hydrolysis of S-D-lactoyl-glutathione to form glutathione and D-lactic acid. This is Hydroxyacylglutathione hydrolase from Synechococcus sp. (strain JA-2-3B'a(2-13)) (Cyanobacteria bacterium Yellowstone B-Prime).